We begin with the raw amino-acid sequence, 134 residues long: uncharacterized protein (134 aa).

The HTH tetR-type domain maps to 10-70 (KETRQRIIDA…AVLASRQHPL (61 aa)). Residues 33-52 (TLDQIARKAGVTRGAVYWHF) constitute a DNA-binding region (H-T-H motif).

Unknown, does not seem to be involved in regulation of the ttgGHI or ttgVW operons. This is an uncharacterized protein from Pseudomonas putida (strain DOT-T1E).